Reading from the N-terminus, the 326-residue chain is Putative ubiquitin-conjugating enzyme E2 38 (326 aa).

Residues 54 to 214 (NWVKKVQDEW…VFLLSLKTMV (161 aa)) enclose the UBC core domain. The Glycyl thioester intermediate role is filled by C140. Residues 297–326 (LAEKPKPPVNNANTENQSKKKTRKRSRSSR) form a disordered region. Residues 315 to 326 (KKKTRKRSRSSR) show a composition bias toward basic residues.

This sequence belongs to the ubiquitin-conjugating enzyme family.

It catalyses the reaction S-ubiquitinyl-[E1 ubiquitin-activating enzyme]-L-cysteine + [E2 ubiquitin-conjugating enzyme]-L-cysteine = [E1 ubiquitin-activating enzyme]-L-cysteine + S-ubiquitinyl-[E2 ubiquitin-conjugating enzyme]-L-cysteine.. The protein operates within protein modification; protein ubiquitination. Accepts the ubiquitin from the E1 complex and catalyzes its covalent attachment to other proteins. This chain is Putative ubiquitin-conjugating enzyme E2 38 (UBC38), found in Arabidopsis thaliana (Mouse-ear cress).